A 172-amino-acid polypeptide reads, in one-letter code: Acetolactate synthase small subunit (172 aa).

Residues 4 to 79 (IITLTVVNRS…DVLKVTDITN (76 aa)) form the ACT domain.

It belongs to the acetolactate synthase small subunit family. In terms of assembly, dimer of large and small chains.

It catalyses the reaction 2 pyruvate + H(+) = (2S)-2-acetolactate + CO2. It functions in the pathway amino-acid biosynthesis; L-isoleucine biosynthesis; L-isoleucine from 2-oxobutanoate: step 1/4. It participates in amino-acid biosynthesis; L-valine biosynthesis; L-valine from pyruvate: step 1/4. This chain is Acetolactate synthase small subunit (ilvH), found in Bacillus subtilis (strain 168).